The sequence spans 238 residues: Uridylate kinase (238 aa).

Residue 12 to 15 (KLSG) coordinates ATP. Position 54 (Gly54) interacts with UMP. Positions 55 and 59 each coordinate ATP. UMP is bound by residues Asp74 and 135 to 142 (TGNPFFTT). ATP-binding residues include Thr162, Tyr168, and Asp171.

This sequence belongs to the UMP kinase family. In terms of assembly, homohexamer.

It localises to the cytoplasm. It catalyses the reaction UMP + ATP = UDP + ADP. Its pathway is pyrimidine metabolism; CTP biosynthesis via de novo pathway; UDP from UMP (UMPK route): step 1/1. Its activity is regulated as follows. Inhibited by UTP. Its function is as follows. Catalyzes the reversible phosphorylation of UMP to UDP. In Herminiimonas arsenicoxydans, this protein is Uridylate kinase.